The following is a 425-amino-acid chain: Dihydroorotase (425 aa).

2 residues coordinate Zn(2+): His56 and His58. Substrate is bound by residues 58 to 60 (HYR) and Asn90. Positions 148, 175, and 228 each coordinate Zn(2+). A substrate-binding site is contributed by Asn274. A Zn(2+)-binding site is contributed by Asp301. Asp301 is an active-site residue. Residues His305 and 319-320 (FG) each bind substrate.

This sequence belongs to the metallo-dependent hydrolases superfamily. DHOase family. Class I DHOase subfamily. Requires Zn(2+) as cofactor.

The enzyme catalyses (S)-dihydroorotate + H2O = N-carbamoyl-L-aspartate + H(+). The protein operates within pyrimidine metabolism; UMP biosynthesis via de novo pathway; (S)-dihydroorotate from bicarbonate: step 3/3. Its function is as follows. Catalyzes the reversible cyclization of carbamoyl aspartate to dihydroorotate. In Lactobacillus helveticus (strain DPC 4571), this protein is Dihydroorotase.